The following is a 632-amino-acid chain: Protein EAP1 (632 aa).

3 disordered regions span residues 1 to 80 (MELN…KKNK), 149 to 204 (MGPP…DDEE), and 248 to 313 (KSKG…PSLS). Composition is skewed to polar residues over residues 7-38 (SIISSSQFSGELSDSDTAAATHKSQQAISNLF) and 54-69 (VESSTDSSNISVATSG). Residue S30 is modified to Phosphoserine. A phosphoserine mark is found at S281 and S282. Positions 288 to 298 (NLKRQDKKEES) are enriched in basic and acidic residues. Phosphoserine occurs at positions 327 and 344. A disordered region spans residues 347 to 378 (SLPSLDNNNQVPSSNVSVVNNDGNSTPHQSGS). Positions 353 to 371 (NNNQVPSSNVSVVNNDGNS) are enriched in low complexity. S387 is subject to Phosphoserine. Disordered regions lie at residues 429–541 (QHPP…PPPP) and 587–632 (QGNF…KNIK). 440-447 (GLLNKGKS) lines the ATP pocket. The segment covering 474-486 (PNFPQRMMPPPPG) has biased composition (pro residues). Positions 492-505 (KDSKDVNKKEDRQL) are enriched in basic and acidic residues. Polar residues-rich tracts occupy residues 507-516 (QNKNPNGTRN), 590-603 (FPPNFQQGFGSNSP), and 610-621 (INANGKNVTNQL).

As to quaternary structure, interacts with SMY2, SYH1 and eIF4E.

The protein localises to the cytoplasm. Functionally, can regulate translation through binding to eIF4E. Competes with eIF4G and p20 for binding to eIF4E in vivo and inhibits cap-dependent translation in vitro. Plays a role in cell growth and is implicated in the TOR signaling cascade. Functions independently of eIF4E to maintain genetic stability and to attenuate GCN4 translation upon TOR inactivation. In Saccharomyces cerevisiae (strain ATCC 204508 / S288c) (Baker's yeast), this protein is Protein EAP1 (EAP1).